Reading from the N-terminus, the 127-residue chain is Large ribosomal subunit protein bL17 (127 aa).

The protein belongs to the bacterial ribosomal protein bL17 family. As to quaternary structure, part of the 50S ribosomal subunit. Contacts protein L32.

In Pediococcus pentosaceus (strain ATCC 25745 / CCUG 21536 / LMG 10740 / 183-1w), this protein is Large ribosomal subunit protein bL17.